Consider the following 38-residue polypeptide: Natriuretic peptide DNP (38 aa).

An intrachain disulfide couples C7 to C23. The interval 19 to 38 is disordered; the sequence is SNLGCPSLRDPRPNAPSTSA.

Belongs to the natriuretic peptide family. As to expression, expressed by the venom gland.

It localises to the secreted. In terms of biological role, exhibits vasodilator, natriuretic and diuretic properties in animal models and human tissues. Acts by stimulating cGMP via the natriuretic peptide receptor 1 (NPR1). Is a poor agonist of the atrial natriuretic peptide receptor 2 (NPR2). Is not degraded by neutral endopeptidase (NEP/MME). Binds to atrial natriuretic peptide clearance receptor (NPR-C/NPR3), which may be responsible of the removal of DNP from the circulation. Increases calcium uptake and induces histamine release from rat peritoneal mast cells. Increases calcium-activated potassium (KCa) current in gastric antral circular smooth muscle cells by increasing cGMP production and activating inositol trisphosphate receptors (IP3Rs). In vivo, reduces both systolic and diastolic blood pressure with no effect on heart rate, when intravenously injected in conscious rabbits. The chain is Natriuretic peptide DNP from Dendroaspis angusticeps (Eastern green mamba).